Reading from the N-terminus, the 162-residue chain is Nucleotide-binding protein SGR_2909 (162 aa).

Belongs to the YajQ family.

Nucleotide-binding protein. This chain is Nucleotide-binding protein SGR_2909, found in Streptomyces griseus subsp. griseus (strain JCM 4626 / CBS 651.72 / NBRC 13350 / KCC S-0626 / ISP 5235).